Here is a 153-residue protein sequence, read N- to C-terminus: 6,7-dimethyl-8-ribityllumazine synthase (153 aa).

Residues phenylalanine 22, 56 to 58, and 80 to 82 each bind 5-amino-6-(D-ribitylamino)uracil; these read AFE and CVI. A (2S)-2-hydroxy-3-oxobutyl phosphate-binding site is contributed by 85 to 86; sequence AT. Histidine 88 acts as the Proton donor in catalysis. 5-amino-6-(D-ribitylamino)uracil is bound at residue phenylalanine 113. Residue arginine 127 participates in (2S)-2-hydroxy-3-oxobutyl phosphate binding.

This sequence belongs to the DMRL synthase family.

It catalyses the reaction (2S)-2-hydroxy-3-oxobutyl phosphate + 5-amino-6-(D-ribitylamino)uracil = 6,7-dimethyl-8-(1-D-ribityl)lumazine + phosphate + 2 H2O + H(+). It functions in the pathway cofactor biosynthesis; riboflavin biosynthesis; riboflavin from 2-hydroxy-3-oxobutyl phosphate and 5-amino-6-(D-ribitylamino)uracil: step 1/2. Catalyzes the formation of 6,7-dimethyl-8-ribityllumazine by condensation of 5-amino-6-(D-ribitylamino)uracil with 3,4-dihydroxy-2-butanone 4-phosphate. This is the penultimate step in the biosynthesis of riboflavin. The polypeptide is 6,7-dimethyl-8-ribityllumazine synthase (Endomicrobium trichonymphae).